Here is a 213-residue protein sequence, read N- to C-terminus: Uridine kinase (213 aa).

G15 to S22 serves as a coordination point for ATP.

The protein belongs to the uridine kinase family.

The protein localises to the cytoplasm. The enzyme catalyses uridine + ATP = UMP + ADP + H(+). It carries out the reaction cytidine + ATP = CMP + ADP + H(+). It functions in the pathway pyrimidine metabolism; CTP biosynthesis via salvage pathway; CTP from cytidine: step 1/3. The protein operates within pyrimidine metabolism; UMP biosynthesis via salvage pathway; UMP from uridine: step 1/1. This is Uridine kinase from Pectobacterium carotovorum subsp. carotovorum (strain PC1).